A 502-amino-acid polypeptide reads, in one-letter code: Ubiquitin-associated protein 1 (502 aa).

The segment at 1 to 95 is interaction with ESCRT-I; sequence MASKKLGTDV…AEAKVNSKSG (95 aa). The UMA domain occupies 17 to 63; that stretch reads LDDVPFKIGDKFKTPAKVGLPIGFSLPDCLQVVREMQYDFSLEKKTI. Basic and acidic residues predominate over residues 80–100; that stretch reads ERKAEEAEAKVNSKSGPEGDS. Disordered stretches follow at residues 80–117 and 135–156; these read ERKA…PPPI and VSSS…DFNP. Phosphoserine is present on residues Ser146, Ser205, and Ser289. The tract at residues 260-290 is interaction with PTPN23; that stretch reads VSNIKSLSFPKLDSDDSNQKTVKLASTFHST. 2 consecutive UBA domains span residues 389-430 and 451-498; these read SPSE…LFAH and QCSE…LMAR.

As to quaternary structure, component of an ESCRT-I complex (endosomal sorting complex required for transport I) which consists of TSG101, VPS28, VPS37A and UBAP1 in a 1:1:1:1 stoichiometry. Interacts with PTPN23. Interacts (via UBA domains) with ubiquitinated proteins. Ubiquitous. Highly expressed in heart, liver, brain, kidney, spleen, skeletal muscle, stomach, testis and lung.

Its subcellular location is the cytoplasm. The protein resides in the cytosol. It is found in the endosome. Component of the ESCRT-I complex, a regulator of vesicular trafficking process. Binds to ubiquitinated cargo proteins and is required for the sorting of endocytic ubiquitinated cargos into multivesicular bodies (MVBs). Plays a role in the proteasomal degradation of ubiquitinated cell-surface proteins, such as EGFR and BST2. This Mus musculus (Mouse) protein is Ubiquitin-associated protein 1.